Here is a 297-residue protein sequence, read N- to C-terminus: Acetylglutamate kinase (297 aa).

Residues 72–73, Arg94, and Asn193 contribute to the substrate site; that span reads GG.

This sequence belongs to the acetylglutamate kinase family. ArgB subfamily.

It is found in the cytoplasm. It carries out the reaction N-acetyl-L-glutamate + ATP = N-acetyl-L-glutamyl 5-phosphate + ADP. Its pathway is amino-acid biosynthesis; L-arginine biosynthesis; N(2)-acetyl-L-ornithine from L-glutamate: step 2/4. Functionally, catalyzes the ATP-dependent phosphorylation of N-acetyl-L-glutamate. The protein is Acetylglutamate kinase of Mycobacterium leprae (strain TN).